Reading from the N-terminus, the 70-residue chain is Protein SlyX homolog (70 aa).

It belongs to the SlyX family.

This chain is Protein SlyX homolog, found in Shewanella denitrificans (strain OS217 / ATCC BAA-1090 / DSM 15013).